We begin with the raw amino-acid sequence, 345 residues long: Dihydroorotase (345 aa).

Zn(2+) contacts are provided by histidine 13 and histidine 15. Residues 15–17 and asparagine 41 each bind substrate; that span reads HFR. Zn(2+)-binding residues include lysine 98, histidine 135, and histidine 173. Lysine 98 is modified (N6-carboxylysine). Histidine 135 is a binding site for substrate. Leucine 218 provides a ligand contact to substrate. Aspartate 246 contacts Zn(2+). The active site involves aspartate 246. Histidine 250 and alanine 262 together coordinate substrate.

This sequence belongs to the metallo-dependent hydrolases superfamily. DHOase family. Class II DHOase subfamily. Homodimer. Zn(2+) serves as cofactor.

It carries out the reaction (S)-dihydroorotate + H2O = N-carbamoyl-L-aspartate + H(+). It participates in pyrimidine metabolism; UMP biosynthesis via de novo pathway; (S)-dihydroorotate from bicarbonate: step 3/3. In terms of biological role, catalyzes the reversible cyclization of carbamoyl aspartate to dihydroorotate. The chain is Dihydroorotase from Shewanella halifaxensis (strain HAW-EB4).